The following is a 394-amino-acid chain: Elongation factor Tu 1 (394 aa).

Residues 9-204 (KPHCNIGTIG…AIDDYIPQPT (196 aa)) enclose the tr-type G domain. Positions 18–25 (GHVDHGKT) are G1. GTP is bound at residue 18-25 (GHVDHGKT). Thr25 serves as a coordination point for Mg(2+). The tract at residues 61–65 (GITIQ) is G2. The interval 82–85 (DCPG) is G3. GTP-binding positions include 82–86 (DCPGH) and 137–140 (NKID). Positions 137–140 (NKID) are G4. The G5 stretch occupies residues 174-176 (SAL).

Belongs to the TRAFAC class translation factor GTPase superfamily. Classic translation factor GTPase family. EF-Tu/EF-1A subfamily. Monomer.

It is found in the cytoplasm. The catalysed reaction is GTP + H2O = GDP + phosphate + H(+). Functionally, GTP hydrolase that promotes the GTP-dependent binding of aminoacyl-tRNA to the A-site of ribosomes during protein biosynthesis. The protein is Elongation factor Tu 1 of Orientia tsutsugamushi (strain Boryong) (Rickettsia tsutsugamushi).